A 624-amino-acid chain; its full sequence is Probable potassium transport system protein Kup 2 (624 aa).

Transmembrane regions (helical) follow at residues 14 to 34, 51 to 71, 97 to 117, 133 to 153, 163 to 183, 211 to 231, 245 to 265, 283 to 303, 335 to 355, 364 to 384, 393 to 413, and 416 to 436; these read LSFA…LYAF, ILSL…LVIV, GGWL…DGML, LSPN…FFLF, IGVY…ILGF, SALF…ALFA, WFAV…AFVL, FLPV…QAII, VYLP…VVIF, AYGI…GIIA, FKIL…AGNI, and LLTG…VMYT.

It belongs to the HAK/KUP transporter (TC 2.A.72) family.

Its subcellular location is the cell inner membrane. It carries out the reaction K(+)(in) + H(+)(in) = K(+)(out) + H(+)(out). Transport of potassium into the cell. Likely operates as a K(+):H(+) symporter. The protein is Probable potassium transport system protein Kup 2 of Legionella pneumophila (strain Lens).